The primary structure comprises 312 residues: Olfactory receptor 1500 (312 aa).

At 1–25 (MTGNNQTLILEFLLLGLPIPSEYHL) the chain is on the extracellular side. N5 carries N-linked (GlcNAc...) asparagine glycosylation. A helical transmembrane segment spans residues 26 to 49 (LFYALFLAMYLTIILGNLLIIVLV). Residues 50–57 (RLDSHLHM) lie on the Cytoplasmic side of the membrane. The chain crosses the membrane as a helical span at residues 58 to 79 (PMYLFLSNLSFSDLCFSSVTMP). Over 80–100 (KLLQNMQSQVPSISYTGCLTQ) the chain is Extracellular. C97 and C189 are oxidised to a cystine. A helical membrane pass occupies residues 101 to 120 (LYFFMVFGDMESFLLVVMAY). Residues 121 to 139 (DRYVAICFPLRYTTIMSTK) lie on the Cytoplasmic side of the membrane. Residues 140–158 (FCASLVLLLWMLTMTHALL) form a helical membrane-spanning segment. Over 159–196 (HTLLIARLSFCEKNVILHFFCDISALLKLSCSDIYVNE) the chain is Extracellular. A helical transmembrane segment spans residues 197-219 (LMIYILGGLIIIIPFLLIVMSYV). Residues 220–236 (RIFFSILKFPSIQDIYK) lie on the Cytoplasmic side of the membrane. A helical membrane pass occupies residues 237–260 (VFSTCGSHLSVVTLFYGTIFGIYL). Over 261–272 (CPSGNNSTVKEI) the chain is Extracellular. A helical membrane pass occupies residues 273–292 (AMAMMYTVVTPMLNPFIYSL). At 293-312 (RNRDMKRALIRVICTKKISL) the chain is on the cytoplasmic side.

Belongs to the G-protein coupled receptor 1 family. As to expression, olfactory epithelium.

It localises to the cell membrane. Odorant receptor. In Rattus norvegicus (Rat), this protein is Olfactory receptor 1500 (Olr1500).